The chain runs to 553 residues: Flagellar hook-associated protein 1 (553 aa).

This sequence belongs to the flagella basal body rod proteins family.

Its subcellular location is the secreted. It is found in the bacterial flagellum. The chain is Flagellar hook-associated protein 1 (flgK) from Salmonella typhi.